We begin with the raw amino-acid sequence, 355 residues long: Erythronate-4-phosphate dehydrogenase (355 aa).

Positions 45 and 66 each coordinate substrate. Aspartate 146 contacts NAD(+). Arginine 206 is an active-site residue. Aspartate 229 is a binding site for NAD(+). Glutamate 234 is an active-site residue. Residue histidine 251 is the Proton donor of the active site. Glycine 254 provides a ligand contact to NAD(+). Tyrosine 255 lines the substrate pocket.

Belongs to the D-isomer specific 2-hydroxyacid dehydrogenase family. PdxB subfamily. Homodimer.

It is found in the cytoplasm. The enzyme catalyses 4-phospho-D-erythronate + NAD(+) = (R)-3-hydroxy-2-oxo-4-phosphooxybutanoate + NADH + H(+). Its pathway is cofactor biosynthesis; pyridoxine 5'-phosphate biosynthesis; pyridoxine 5'-phosphate from D-erythrose 4-phosphate: step 2/5. Catalyzes the oxidation of erythronate-4-phosphate to 3-hydroxy-2-oxo-4-phosphonooxybutanoate. This chain is Erythronate-4-phosphate dehydrogenase, found in Acinetobacter baumannii (strain AB307-0294).